The sequence spans 97 residues: DNA-binding protein HU (97 aa).

This sequence belongs to the bacterial histone-like protein family. As to quaternary structure, has been isolated in complexes with 5S rRNA and bL25, and with 5S rRNA, bL25 and uL5. Homodimer.

Histone-like DNA-binding protein which is capable of wrapping DNA to stabilize it, and thus to prevent its denaturation under extreme environmental conditions. The polypeptide is DNA-binding protein HU (Thermus thermophilus (strain ATCC 27634 / DSM 579 / HB8)).